The primary structure comprises 202 residues: 3-isopropylmalate dehydratase small subunit (202 aa).

This sequence belongs to the LeuD family. LeuD type 1 subfamily. As to quaternary structure, heterodimer of LeuC and LeuD.

The enzyme catalyses (2R,3S)-3-isopropylmalate = (2S)-2-isopropylmalate. Its pathway is amino-acid biosynthesis; L-leucine biosynthesis; L-leucine from 3-methyl-2-oxobutanoate: step 2/4. Catalyzes the isomerization between 2-isopropylmalate and 3-isopropylmalate, via the formation of 2-isopropylmaleate. This is 3-isopropylmalate dehydratase small subunit from Blochmanniella pennsylvanica (strain BPEN).